A 366-amino-acid chain; its full sequence is Aminomethyltransferase (366 aa).

The protein belongs to the GcvT family. In terms of assembly, the glycine cleavage system is composed of four proteins: P, T, L and H.

It carries out the reaction N(6)-[(R)-S(8)-aminomethyldihydrolipoyl]-L-lysyl-[protein] + (6S)-5,6,7,8-tetrahydrofolate = N(6)-[(R)-dihydrolipoyl]-L-lysyl-[protein] + (6R)-5,10-methylene-5,6,7,8-tetrahydrofolate + NH4(+). In terms of biological role, the glycine cleavage system catalyzes the degradation of glycine. In Neisseria meningitidis serogroup A / serotype 4A (strain DSM 15465 / Z2491), this protein is Aminomethyltransferase.